The primary structure comprises 226 residues: N-(5'-phosphoribosyl)anthranilate isomerase 2 (226 aa).

Belongs to the TrpF family.

The catalysed reaction is N-(5-phospho-beta-D-ribosyl)anthranilate = 1-(2-carboxyphenylamino)-1-deoxy-D-ribulose 5-phosphate. The protein operates within amino-acid biosynthesis; L-tryptophan biosynthesis; L-tryptophan from chorismate: step 3/5. The polypeptide is N-(5'-phosphoribosyl)anthranilate isomerase 2 (trpF2) (Methanosarcina mazei (strain ATCC BAA-159 / DSM 3647 / Goe1 / Go1 / JCM 11833 / OCM 88) (Methanosarcina frisia)).